Consider the following 632-residue polypeptide: 1-deoxy-D-xylulose-5-phosphate synthase (632 aa).

Residues H75 and 117–119 (GHA) each bind thiamine diphosphate. D146 lines the Mg(2+) pocket. Thiamine diphosphate contacts are provided by residues 147-148 (AA), N175, and E370. N175 lines the Mg(2+) pocket.

The protein belongs to the transketolase family. DXPS subfamily. In terms of assembly, homodimer. Requires Mg(2+) as cofactor. It depends on thiamine diphosphate as a cofactor.

It catalyses the reaction D-glyceraldehyde 3-phosphate + pyruvate + H(+) = 1-deoxy-D-xylulose 5-phosphate + CO2. It functions in the pathway metabolic intermediate biosynthesis; 1-deoxy-D-xylulose 5-phosphate biosynthesis; 1-deoxy-D-xylulose 5-phosphate from D-glyceraldehyde 3-phosphate and pyruvate: step 1/1. Functionally, catalyzes the acyloin condensation reaction between C atoms 2 and 3 of pyruvate and glyceraldehyde 3-phosphate to yield 1-deoxy-D-xylulose-5-phosphate (DXP). This Chlamydia muridarum (strain MoPn / Nigg) protein is 1-deoxy-D-xylulose-5-phosphate synthase.